The sequence spans 86 residues: Triosephosphate isomerase (86 aa).

The active-site Proton acceptor is E62.

It belongs to the triosephosphate isomerase family. In terms of assembly, homodimer.

The catalysed reaction is D-glyceraldehyde 3-phosphate = dihydroxyacetone phosphate. Its pathway is carbohydrate biosynthesis; gluconeogenesis. The protein operates within carbohydrate degradation; glycolysis; D-glyceraldehyde 3-phosphate from glycerone phosphate: step 1/1. This is Triosephosphate isomerase from Platanus orientalis (Oriental plane-tree).